A 287-amino-acid polypeptide reads, in one-letter code: Small ribosomal subunit biogenesis GTPase RsgA (287 aa).

Positions 61–218 (SSELIRPTVA…LVDTPGFTTL (158 aa)) constitute a CP-type G domain. Residues 110 to 113 (NKED) and 161 to 169 (GPSGAGKST) each bind GTP. The Zn(2+) site is built by C242, C247, H249, and C255.

It belongs to the TRAFAC class YlqF/YawG GTPase family. RsgA subfamily. In terms of assembly, monomer. Associates with 30S ribosomal subunit, binds 16S rRNA. It depends on Zn(2+) as a cofactor.

The protein localises to the cytoplasm. Its function is as follows. One of several proteins that assist in the late maturation steps of the functional core of the 30S ribosomal subunit. Helps release RbfA from mature subunits. May play a role in the assembly of ribosomal proteins into the subunit. Circularly permuted GTPase that catalyzes slow GTP hydrolysis, GTPase activity is stimulated by the 30S ribosomal subunit. In Clostridium perfringens (strain SM101 / Type A), this protein is Small ribosomal subunit biogenesis GTPase RsgA.